Consider the following 373-residue polypeptide: Velvet complex subunit RYP3 (373 aa).

Residues 1–10 (MYTLKQDRPH) show a composition bias toward basic and acidic residues. Disordered stretches follow at residues 1–26 (MYTL…LQHG) and 344–373 (RKDG…ENEG). The Velvet domain maps to 48-344 (VYEGRIYSLD…AFQGIKIPIR (297 aa)). The span at 364–373 (GEGEDWENEG) shows a compositional bias: acidic residues.

Belongs to the velvet family. VelB subfamily. In terms of assembly, component of the heterotrimeric velvet complex composed of LAE1, VEL1 and VEL2; VEL1A acting as a bridging protein between LAE1 and VEL2. Forms a heterodimeric complex with VOS1; the formation of the VEL2-VOS1 complex is light-dependent.

The protein localises to the nucleus. The protein resides in the cytoplasm. In terms of biological role, component of the velvet transcription factor complex that controls sexual/asexual developmental ratio in response to light, promoting sexual development in the darkness while stimulating asexual sporulation under illumination. The velvet complex acts as a global regulator for secondary metabolite gene expression. Component of the RYP2-RYP3 heterodimeric complex that plays a dual role in activating genes associated with spore maturation and repressing certain development-associated genes. The complex binds DNA through the DNA-binding domain of RYP2 that recognizes an 11-nucleotide consensus sequence 5'-CTGGCCGCGGC-3' consisting of two motifs in the promoters of key developmental regulatory genes. Required for viable spore production and regulation of sporulation in response to temperature, as well as for the switch to yeast-form in the presence of host cells. This chain is Velvet complex subunit RYP3 (RYP3), found in Ajellomyces capsulatus (Darling's disease fungus).